We begin with the raw amino-acid sequence, 443 residues long: Clustered-asparagine-rich protein (443 aa).

Positions 16–106 constitute an RRM 1 domain; the sequence is TKLHIQNIPP…RNIDAKFAVP (91 aa). The segment at 253–279 is disordered; that stretch reads NHLNNNNNNINNNNNNNNNNNNNNNVM. Residues 256–277 show a composition bias toward low complexity; that stretch reads NNNNNNINNNNNNNNNNNNNNN. Residues 342-435 form the RRM 2 domain; that stretch reads SSITIMKKQN…KYLKVQLKKG (94 aa).

This chain is Clustered-asparagine-rich protein, found in Plasmodium falciparum.